Here is a 427-residue protein sequence, read N- to C-terminus: Histidine--tRNA ligase (427 aa).

This sequence belongs to the class-II aminoacyl-tRNA synthetase family. In terms of assembly, homodimer.

The protein localises to the cytoplasm. The enzyme catalyses tRNA(His) + L-histidine + ATP = L-histidyl-tRNA(His) + AMP + diphosphate + H(+). This chain is Histidine--tRNA ligase, found in Aster yellows witches'-broom phytoplasma (strain AYWB).